We begin with the raw amino-acid sequence, 528 residues long: GMP synthase [glutamine-hydrolyzing] (528 aa).

The 197-residue stretch at 3–199 (KVAIIDFGSQ…FLDIAGCQKD (197 aa)) folds into the Glutamine amidotransferase type-1 domain. Cys-83 functions as the Nucleophile in the catalytic mechanism. Residues His-174 and Glu-176 contribute to the active site. A GMPS ATP-PPase domain is found at 200-394 (WTVTSFIDDQ…LGISTEILMR (195 aa)). Position 227 to 233 (227 to 233 (SGGVDSS)) interacts with ATP.

Homodimer.

The catalysed reaction is XMP + L-glutamine + ATP + H2O = GMP + L-glutamate + AMP + diphosphate + 2 H(+). Its pathway is purine metabolism; GMP biosynthesis; GMP from XMP (L-Gln route): step 1/1. Functionally, catalyzes the synthesis of GMP from XMP. The protein is GMP synthase [glutamine-hydrolyzing] of Ehrlichia ruminantium (strain Gardel).